The sequence spans 98 residues: ESAT-6-like protein EsxK (98 aa).

Belongs to the WXG100 family. CFP-10 subfamily. In terms of assembly, strongly interacts with EsxL to form a heterodimeric complex under reducing conditions. The complex is regulated by the redox state of EsxL.

The protein resides in the secreted. This is ESAT-6-like protein EsxK from Mycobacterium tuberculosis (strain ATCC 25618 / H37Rv).